Here is a 311-residue protein sequence, read N- to C-terminus: Cytosolic Fe-S cluster assembly factor Nubp1 homolog (311 aa).

Positions 1 to 21 (MQAPPPEHCPGVESEDAGKGS) are disordered. Residues Cys-9, Cys-23, Cys-26, and Cys-32 each coordinate [4Fe-4S] cluster. 63–70 (GKGGVGKS) is an ATP binding site. Residues Cys-240 and Cys-243 each coordinate [4Fe-4S] cluster.

Belongs to the Mrp/NBP35 ATP-binding proteins family. NUBP1/NBP35 subfamily. As to quaternary structure, heterotetramer of 2 Nubp1 and 2 Nubp2 chains. [4Fe-4S] cluster serves as cofactor.

It is found in the cytoplasm. Component of the cytosolic iron-sulfur (Fe/S) protein assembly (CIA) machinery. Required for maturation of extramitochondrial Fe-S proteins. The Nubp1-Nubp2 heterotetramer forms a Fe-S scaffold complex, mediating the de novo assembly of an Fe-S cluster and its transfer to target apoproteins. In Drosophila sechellia (Fruit fly), this protein is Cytosolic Fe-S cluster assembly factor Nubp1 homolog.